The sequence spans 1345 residues: Protein dispatched homolog 2 (1345 aa).

Positions 1–28 are disordered; it reads MAPEASPERSCSLHTCPLEDPTGAPVPP. Residues 125 to 145 traverse the membrane as a helical segment; the sequence is VAVIVGCLAFIFLCTLAGLLG. Asn-304 and Asn-420 each carry an N-linked (GlcNAc...) asparagine glycan. The region spanning 429 to 598 is the SSD domain; the sequence is LGLKPRLLKY…LLWLPATVVL (170 aa). 6 consecutive transmembrane segments (helical) span residues 440-460, 465-485, 497-517, 544-564, 572-592, and 659-679; these read LAEDTMYPLIALVVIFFGMSL, LFITFMSLLGVLGSLMVAYFL, FVNLAALLLLSGVCVNYTLIF, FGYLLLVSGLTTSAAFYGSYL, CFALFMGTAVLVHMGLTLLWL, and YIWICWFAALAAGGAYIGGVS. Asn-776 is a glycosylation site (N-linked (GlcNAc...) asparagine). The next 5 membrane-spanning stretches (helical) occupy residues 919–939, 945–965, 974–994, 1019–1039, and 1043–1063; these read PAVVLGLALALAFATLLLSTW, LFSVAAVAGTVLLTVGLLVLL, ALFLSASVGLSVDLTINYCIS, AMTTGVLFASGVIMLPSTILL, and LGIIVMMVKFLGCGFASFFFQ. Disordered stretches follow at residues 1251–1271 and 1295–1345; these read VRVPDSVGTSPEVMNGTGHPI and PNMP…GYSS. Residues 1297–1306 show a composition bias toward polar residues; it reads MPNSHHSSLS. Arg-1310 is modified (omega-N-methylarginine).

Belongs to the dispatched family.

Its subcellular location is the membrane. In Mus musculus (Mouse), this protein is Protein dispatched homolog 2 (Disp2).